The primary structure comprises 421 residues: ATP-dependent RNA helicase RhlB (421 aa).

The Q motif signature appears at 9-37; the sequence is QKFSDFALHPAVIEALEKKGFHNCTPIQA. The Helicase ATP-binding domain occupies 40–219; sequence LPLTLEGRDV…FEQMNNAEYV (180 aa). Residue 53-60 participates in ATP binding; sequence AQTGTGKT. A DEAD box motif is present at residues 165-168; that stretch reads DEAD. The Helicase C-terminal domain occupies 245–390; it reads RLLQTLLEEE…VSKYNPDALM (146 aa). The interval 396-421 is disordered; that stretch reads PLRLTRARPGNGPRRNGPPRNRRRSG. Over residues 403-414 the composition is skewed to low complexity; the sequence is RPGNGPRRNGPP.

The protein belongs to the DEAD box helicase family. RhlB subfamily. Component of the RNA degradosome, which is a multiprotein complex involved in RNA processing and mRNA degradation.

The protein localises to the cytoplasm. It carries out the reaction ATP + H2O = ADP + phosphate + H(+). Functionally, DEAD-box RNA helicase involved in RNA degradation. Has RNA-dependent ATPase activity and unwinds double-stranded RNA. This chain is ATP-dependent RNA helicase RhlB, found in Klebsiella pneumoniae subsp. pneumoniae (strain ATCC 700721 / MGH 78578).